Here is a 92-residue protein sequence, read N- to C-terminus: N(2)-fixation sustaining protein CowN (92 aa).

This sequence belongs to the CowN family.

Its function is as follows. Is required to sustain N(2)-dependent growth in the presence of low levels of carbon monoxide (CO). Probably acts by protecting the N(2) fixation ability of the nitrogenase complex, which is inactivated in the presence of CO. This Rhodopseudomonas palustris (strain BisA53) protein is N(2)-fixation sustaining protein CowN.